The sequence spans 162 residues: Probable chemoreceptor glutamine deamidase CheD (162 aa).

This sequence belongs to the CheD family.

The enzyme catalyses L-glutaminyl-[protein] + H2O = L-glutamyl-[protein] + NH4(+). Probably deamidates glutamine residues to glutamate on methyl-accepting chemotaxis receptors (MCPs), playing an important role in chemotaxis. This chain is Probable chemoreceptor glutamine deamidase CheD, found in Clostridium novyi (strain NT).